We begin with the raw amino-acid sequence, 199 residues long: NAD(P)H dehydrogenase (quinone) (199 aa).

Residues 4 to 190 (VLVLYYSTYG…DGARYQGRHV (187 aa)) form the Flavodoxin-like domain. Residues 10–15 (STYGHI) and 78–80 (TRY) each bind FMN. Residue tyrosine 12 participates in NAD(+) binding. Tryptophan 98 contacts substrate. Residues 113 to 119 (SSASQHG) and histidine 134 each bind FMN.

The protein belongs to the WrbA family. FMN is required as a cofactor.

It catalyses the reaction a quinone + NADH + H(+) = a quinol + NAD(+). The catalysed reaction is a quinone + NADPH + H(+) = a quinol + NADP(+). The sequence is that of NAD(P)H dehydrogenase (quinone) from Methylobacterium sp. (strain 4-46).